Here is a 492-residue protein sequence, read N- to C-terminus: B3 domain-containing protein REM3 (492 aa).

Positions 12–104 (NRPFFVRSLA…VFHVTPSGRS (93 aa)) form a DNA-binding region, TF-B3 1. Positions 105–116 (FSQIRTSSSSGD) are enriched in low complexity. Residues 105–134 (FSQIRTSSSSGDYDSDDDDDEAGDDDSDSK) are disordered. Over residues 117 to 131 (YDSDDDDDEAGDDDS) the composition is skewed to acidic residues. 2 consecutive DNA-binding regions (TF-B3) follow at residues 154 to 250 (YCLL…LCFK) and 286 to 382 (FLTV…FCSE). Residues 385-395 (IEQEEAPEERG) show a composition bias toward basic and acidic residues. Residues 385–427 (IEQEEAPEERGTPLPKRARVSAEVGHSRRTQAPNKSSDDPKIL) are disordered.

Its subcellular location is the nucleus. The chain is B3 domain-containing protein REM3 (REM3) from Arabidopsis thaliana (Mouse-ear cress).